Consider the following 180-residue polypeptide: Adenine phosphoribosyltransferase (180 aa).

This sequence belongs to the purine/pyrimidine phosphoribosyltransferase family. Homodimer.

The protein resides in the cytoplasm. The enzyme catalyses AMP + diphosphate = 5-phospho-alpha-D-ribose 1-diphosphate + adenine. It participates in purine metabolism; AMP biosynthesis via salvage pathway; AMP from adenine: step 1/1. Functionally, catalyzes a salvage reaction resulting in the formation of AMP, that is energically less costly than de novo synthesis. The sequence is that of Adenine phosphoribosyltransferase from Mycolicibacterium paratuberculosis (strain ATCC BAA-968 / K-10) (Mycobacterium paratuberculosis).